The primary structure comprises 375 residues: Carbamoyl phosphate synthase small chain (375 aa).

The segment at 1 to 186 (MRALLALEDG…LEPGGCAWVG (186 aa)) is CPSase. Ser45, Gly238, and Gly240 together coordinate L-glutamine. The region spanning 190–375 (RLVVYDFGIK…RNMVREAAGC (186 aa)) is the Glutamine amidotransferase type-1 domain. Cys265 (nucleophile) is an active-site residue. Residues Leu266, Gln269, Asn307, Gly309, and Phe310 each contribute to the L-glutamine site. Residues His348 and Glu350 contribute to the active site.

It belongs to the CarA family. In terms of assembly, composed of two chains; the small (or glutamine) chain promotes the hydrolysis of glutamine to ammonia, which is used by the large (or ammonia) chain to synthesize carbamoyl phosphate. Tetramer of heterodimers (alpha,beta)4.

It carries out the reaction hydrogencarbonate + L-glutamine + 2 ATP + H2O = carbamoyl phosphate + L-glutamate + 2 ADP + phosphate + 2 H(+). It catalyses the reaction L-glutamine + H2O = L-glutamate + NH4(+). Its pathway is amino-acid biosynthesis; L-arginine biosynthesis; carbamoyl phosphate from bicarbonate: step 1/1. It participates in pyrimidine metabolism; UMP biosynthesis via de novo pathway; (S)-dihydroorotate from bicarbonate: step 1/3. Its function is as follows. Small subunit of the glutamine-dependent carbamoyl phosphate synthetase (CPSase). CPSase catalyzes the formation of carbamoyl phosphate from the ammonia moiety of glutamine, carbonate, and phosphate donated by ATP, constituting the first step of 2 biosynthetic pathways, one leading to arginine and/or urea and the other to pyrimidine nucleotides. The small subunit (glutamine amidotransferase) binds and cleaves glutamine to supply the large subunit with the substrate ammonia. The chain is Carbamoyl phosphate synthase small chain from Nitratidesulfovibrio vulgaris (strain ATCC 29579 / DSM 644 / CCUG 34227 / NCIMB 8303 / VKM B-1760 / Hildenborough) (Desulfovibrio vulgaris).